A 291-amino-acid chain; its full sequence is tRNA U34 carboxymethyltransferase (291 aa).

Carboxy-S-adenosyl-L-methionine is bound by residues Lys-61, Trp-75, Lys-80, Gly-100, 122–124, 149–150, Tyr-169, and Arg-284; these read DPS and VE.

It belongs to the class I-like SAM-binding methyltransferase superfamily. CmoB family. In terms of assembly, homotetramer.

The enzyme catalyses carboxy-S-adenosyl-L-methionine + 5-hydroxyuridine(34) in tRNA = 5-carboxymethoxyuridine(34) in tRNA + S-adenosyl-L-homocysteine + H(+). In terms of biological role, catalyzes carboxymethyl transfer from carboxy-S-adenosyl-L-methionine (Cx-SAM) to 5-hydroxyuridine (ho5U) to form 5-carboxymethoxyuridine (cmo5U) at position 34 in tRNAs. In Campylobacter jejuni subsp. doylei (strain ATCC BAA-1458 / RM4099 / 269.97), this protein is tRNA U34 carboxymethyltransferase.